The sequence spans 407 residues: Argininosuccinate synthase (407 aa).

ATP is bound by residues 16-24 and Ala-44; that span reads AYSGGLDTS. L-citrulline contacts are provided by Tyr-96 and Ser-101. Gly-126 serves as a coordination point for ATP. Residues Thr-128, Asn-132, and Asp-133 each contribute to the L-aspartate site. Position 132 (Asn-132) interacts with L-citrulline. 5 residues coordinate L-citrulline: Arg-136, Ser-185, Ser-194, Glu-270, and Tyr-282.

It belongs to the argininosuccinate synthase family. Type 1 subfamily. As to quaternary structure, homotetramer.

The protein resides in the cytoplasm. It carries out the reaction L-citrulline + L-aspartate + ATP = 2-(N(omega)-L-arginino)succinate + AMP + diphosphate + H(+). It functions in the pathway amino-acid biosynthesis; L-arginine biosynthesis; L-arginine from L-ornithine and carbamoyl phosphate: step 2/3. The sequence is that of Argininosuccinate synthase from Shewanella loihica (strain ATCC BAA-1088 / PV-4).